A 2710-amino-acid chain; its full sequence is Serine/threonine-protein kinase ATR (2710 aa).

Residues 1647 to 2257 form the FAT domain; the sequence is TLAKASFRCQ…LWMMAAVSKS (611 aa). A PI3K/PI4K catalytic domain is found at 2368–2680; the sequence is IADDAEILNS…GVNAAPSLPL (313 aa). The G-loop stretch occupies residues 2374-2380; it reads ILNSLQK. The tract at residues 2545–2553 is catalytic loop; sequence GLGDRHGEN. An activation loop region spans residues 2565 to 2589; the sequence is HVDFSCLFDKGLLLEKPEVVPFRFT. The FATC domain maps to 2678-2710; that stretch reads LPLSVEGQARRLIAEAVSHSNLGKMYVWWMAWF.

This sequence belongs to the PI3/PI4-kinase family. ATM subfamily.

It localises to the nucleus. It catalyses the reaction L-seryl-[protein] + ATP = O-phospho-L-seryl-[protein] + ADP + H(+). The enzyme catalyses L-threonyl-[protein] + ATP = O-phospho-L-threonyl-[protein] + ADP + H(+). In terms of biological role, probable serine/threonine kinase. Seems to play a central role in cell-cycle regulation by transmitting DNA damage signals to downstream effectors of cell-cycle progression. May recognize the substrate consensus sequence [ST]-Q and phosphorylate histone variant H2AX to form H2AXS139ph at sites of DNA damage, thereby regulating DNA damage response mechanism. The sequence is that of Serine/threonine-protein kinase ATR from Oryza sativa subsp. japonica (Rice).